The primary structure comprises 321 residues: L-carnitine dehydrogenase (321 aa).

14 to 19 (GSGVIG) serves as a coordination point for NAD(+). Positions 317–321 (MTFSE) are important for catalytic activity.

It belongs to the 3-hydroxyacyl-CoA dehydrogenase family. L-carnitine dehydrogenase subfamily. Homodimer.

It is found in the cytoplasm. It catalyses the reaction carnitine + NAD(+) = 3-dehydrocarnitine + NADH + H(+). Its pathway is amine and polyamine metabolism; carnitine metabolism. Its activity is regulated as follows. The enzyme activity is strongly inhibited by Ag(+), Ni(+), Hg(+), and p-chloromercuribenzoate, and partially inhibited by Li(+), Ca(2+), Mn(2+), Co(2+), Cu(2+), and Zn(2+). In terms of biological role, catalyzes the NAD(+)-dependent oxidation of L-carnitine to 3-dehydrocarnitine. Is specific for L-carnitine and NAD(+) as substrates since D-carnitine, other carnitine analogs such as choline and betaine, and NADP(+) are not substrates. Despite a high similarity to 3-hydroxyacyl-CoA dehydrogenases, cannot dehydrogenate 3-hydroxybutylate and 3-hydroxybutyl-CoA. Is probably involved in a L-carnitine degradation pathway that allows Pseudomonas sp. strain NBRC 13558 to grow on L-carnitine as the sole source of carbon and nitrogen. The polypeptide is L-carnitine dehydrogenase (Pseudomonas sp).